The sequence spans 614 residues: V-type proton ATPase catalytic subunit A isoform 1 (614 aa).

247–254 (GAFGCGKT) contacts ATP.

Belongs to the ATPase alpha/beta chains family. In terms of assembly, V-ATPase is a heteromultimeric enzyme made up of two complexes: the ATP-hydrolytic V1 complex and the proton translocation V0 complex. The V1 complex consists of three catalytic AB heterodimers that form a heterohexamer, three peripheral stalks each consisting of EG heterodimers, one central rotor including subunits D and F, and the regulatory subunits C and H. The proton translocation complex V0 consists of the proton transport subunit a, a ring of proteolipid subunits c9c'', rotary subunit d, subunits e and f, and the accessory subunits VhaAC45 and ATP6AP2.

The enzyme catalyses ATP + H2O + 4 H(+)(in) = ADP + phosphate + 5 H(+)(out). With respect to regulation, ATP hydrolysis occurs at the interface between the nucleotide-binding domains of subunits A and B. ATP hydrolysis triggers a conformational change in the subunits D and F, which induces a shift of subunit d. The c-ring is subsequently rotated and results in a continuous proton translocation across the membrane. Functionally, catalytic subunit of the V1 complex of vacuolar(H+)-ATPase (V-ATPase), a multisubunit enzyme composed of a peripheral complex (V1) that hydrolyzes ATP and a membrane integral complex (V0) that translocates protons. V-ATPase is responsible for acidifying and maintaining the pH of intracellular compartments and in some cell types, is targeted to the plasma membrane, where it is responsible for acidifying the extracellular environment. The chain is V-type proton ATPase catalytic subunit A isoform 1 (Vha68-1) from Drosophila melanogaster (Fruit fly).